We begin with the raw amino-acid sequence, 367 residues long: MEPIYEEYLANHGTIVKPYYWLSFSLDCSNCPYHIRTGEEARVSLTEFCQIFGFPYGTTFPQTKHLTFYELKTSSGSLVQKGHASSCTGNYIHPESMLFEMNGYLDSAIYNNDSIRHIILYSNNSPCNEANHCCISKMYNFLITYPGITLSIYFSQLYHTEMDFPASAWNREALRSLASLWPRVVLSPISGGIWHSVLHSFISGVSGSHVFQPILTGRALADRHNAYEINAITGVKPYFTDVLLQTKRNPNTKAQEALESYPLNNAFPGQFFQMPSGQLQPNLPPDLRAPVVFVLVPLRDLPPMHMGQNPNKPRNIVRHLNMPQMSFQETKDLGRLPTGRSVEIVEITEQFASSKEADEKKKKKGKK.

Positions 61–177 (PQTKHLTFYE…AWNREALRSL (117 aa)) constitute a CMP/dCMP-type deaminase domain. His-93 contributes to the Zn(2+) binding site. Residue Glu-95 is the Proton donor of the active site. Zn(2+) is bound by residues Cys-127 and Cys-134.

Belongs to the cytidine and deoxycytidylate deaminase family. Zn(2+) is required as a cofactor. In terms of tissue distribution, predominantly expressed in testis.

Functionally, putative C to U editing enzyme whose physiological substrate is not yet known. This is Putative C-&gt;U-editing enzyme APOBEC-4 (APOBEC4) from Homo sapiens (Human).